The sequence spans 314 residues: uncharacterized protein (314 aa).

The tract at residues 1–70 (MAGNSQRRGA…QGRHKKTDDT (70 aa)) is disordered. Positions 43 to 65 (QRPHHPAGKRAAKAARQAQGRHK) are enriched in basic residues. S-adenosyl-L-methionine-binding residues include Gly-265, Ile-285, and Leu-294.

Belongs to the class IV-like SAM-binding methyltransferase superfamily. RNA methyltransferase TrmH family.

This is an uncharacterized protein from Mycolicibacterium vanbaalenii (strain DSM 7251 / JCM 13017 / BCRC 16820 / KCTC 9966 / NRRL B-24157 / PYR-1) (Mycobacterium vanbaalenii).